A 295-amino-acid chain; its full sequence is NADPH-dependent reductive aminase (295 aa).

A signal peptide spans 1-18 (MSKHIGIFGLGAMGTALA). 6-20 (GIFGLGAMGTALAAK) is an NADP(+) binding site.

It belongs to the HIBADH-related family. Homodimer. NADPH is required as a cofactor.

In terms of biological role, NADPH-dependent reductive aminase that catalyzes the reductive coupling of a broad set of carbonyl compounds with a variety of primary and secondary amines. Possesses remarkably high activity for the reductive amination of ketones and amines, often with high stereoselectivity and in some cases with ketone:amine ratios as low as 1:1. The cofactor NADPH, the carbonyl compound and the amine are added to the enzyme in that sequence, followed by the release of product, NADP(+) being released at last. RedAm is also able to act in the reverse, oxidative direction and exhibits activity in the dehydrogenation of amines to yield imines. The highest activity is found for 1-methyl-tetrahydroquinoline and acyclic amines are also found to be transformed. This Aspergillus oryzae (strain ATCC 42149 / RIB 40) (Yellow koji mold) protein is NADPH-dependent reductive aminase.